The following is a 215-amino-acid chain: MAKTLTERFYQPKELKVMGRWSVEDVTVNDPSLRPYINLEARLLPHSHGRHAKKAFGKANVHIVERLINKVMRSGATSHKAGGHFMRRDDRSLMSKKMKAYEVVKEAFMIIERRTKQNPIQVLVRAIENSAPREDTTTIAFGGIRYHMAVDVSPLRRLDIALKNIALGASAKCYRNKTSYAQALAEEIIAAANADPKTFAYSRKEEIERIAQSSR.

It belongs to the universal ribosomal protein uS7 family. Part of the 30S ribosomal subunit.

In terms of biological role, one of the primary rRNA binding proteins, it binds directly to 16S rRNA where it nucleates assembly of the head domain of the 30S subunit. Is located at the subunit interface close to the decoding center. The polypeptide is Small ribosomal subunit protein uS7 (Thermococcus celer).